A 313-amino-acid chain; its full sequence is Beta-ketoacyl-[acyl-carrier-protein] synthase III (313 aa).

Residues cysteine 112 and histidine 238 contribute to the active site. Positions glutamine 239–arginine 243 are ACP-binding. The active site involves asparagine 268.

This sequence belongs to the thiolase-like superfamily. FabH family. In terms of assembly, homodimer.

It is found in the cytoplasm. It catalyses the reaction malonyl-[ACP] + acetyl-CoA + H(+) = 3-oxobutanoyl-[ACP] + CO2 + CoA. It participates in lipid metabolism; fatty acid biosynthesis. Its function is as follows. Catalyzes the condensation reaction of fatty acid synthesis by the addition to an acyl acceptor of two carbons from malonyl-ACP. Catalyzes the first condensation reaction which initiates fatty acid synthesis and may therefore play a role in governing the total rate of fatty acid production. Possesses both acetoacetyl-ACP synthase and acetyl transacylase activities. Its substrate specificity determines the biosynthesis of branched-chain and/or straight-chain of fatty acids. The chain is Beta-ketoacyl-[acyl-carrier-protein] synthase III from Staphylococcus haemolyticus (strain JCSC1435).